Consider the following 205-residue polypeptide: MNEQLVNRTMAFAGILQAIAQVQHLARHGELDNAELAASLNTILVTNPDNTADVYQDKIVLQKGYKLILNQLGDSSQKDVEITRYLVGVLALERKLVRSNSGLGMLAERINQVNRQLHHFAITDEQVIANLASIYSDIISNLGPKIQISGNPVCLQRPIVQQKIRALLLAAMRSAVLWRQLGGKRRHLVFARKAIVDTAKKSLTL.

Belongs to the HflD family.

Its subcellular location is the cytoplasm. It is found in the cell inner membrane. The protein is High frequency lysogenization protein HflD homolog of Shewanella baltica (strain OS185).